Consider the following 322-residue polypeptide: HPr kinase/phosphorylase (322 aa).

Residues His-146 and Lys-167 contribute to the active site. 161-168 (GDSGLGKS) is a binding site for ATP. Ser-168 serves as a coordination point for Mg(2+). Asp-185 (proton acceptor; for phosphorylation activity. Proton donor; for dephosphorylation activity) is an active-site residue. The interval 209 to 218 (LEVRGLGLLD) is important for the catalytic mechanism of both phosphorylation and dephosphorylation. Glu-210 contributes to the Mg(2+) binding site. Arg-250 is a catalytic residue. Positions 271–276 (QVAAGR) are important for the catalytic mechanism of dephosphorylation.

The protein belongs to the HPrK/P family. Homohexamer. Requires Mg(2+) as cofactor.

It catalyses the reaction [HPr protein]-L-serine + ATP = [HPr protein]-O-phospho-L-serine + ADP + H(+). The catalysed reaction is [HPr protein]-O-phospho-L-serine + phosphate + H(+) = [HPr protein]-L-serine + diphosphate. Its function is as follows. Catalyzes the ATP- as well as the pyrophosphate-dependent phosphorylation of a specific serine residue in HPr, a phosphocarrier protein of the phosphoenolpyruvate-dependent sugar phosphotransferase system (PTS). HprK/P also catalyzes the pyrophosphate-producing, inorganic phosphate-dependent dephosphorylation (phosphorolysis) of seryl-phosphorylated HPr (P-Ser-HPr). This chain is HPr kinase/phosphorylase, found in Paraburkholderia phytofirmans (strain DSM 17436 / LMG 22146 / PsJN) (Burkholderia phytofirmans).